The chain runs to 116 residues: DNA-directed RNA polymerase subunit omega (116 aa).

It belongs to the RNA polymerase subunit omega family. The RNAP catalytic core consists of 2 alpha, 1 beta, 1 beta' and 1 omega subunit. When a sigma factor is associated with the core the holoenzyme is formed, which can initiate transcription.

It carries out the reaction RNA(n) + a ribonucleoside 5'-triphosphate = RNA(n+1) + diphosphate. In terms of biological role, promotes RNA polymerase assembly. Latches the N- and C-terminal regions of the beta' subunit thereby facilitating its interaction with the beta and alpha subunits. The chain is DNA-directed RNA polymerase subunit omega from Hyphomonas neptunium (strain ATCC 15444).